A 152-amino-acid polypeptide reads, in one-letter code: Cytosolic calcium-binding protein 1 (152 aa).

Tandem repeats lie at residues 57–62 (VEETEK), 67–71 (TEEAQ), 78–82 (VEIKK), 104–108 (VEAKK), 112–116 (VEEKK), 124–129 (VEEEKK), and 131–136 (EAEEEK). A 7 X 5 AA approximate repeats of V-E-E-K-K region spans residues 57 to 136 (VEETEKPIEE…EKKPEAEEEK (80 aa)). Residues 60–152 (TEKPIEETEE…VTAPVEKADE (93 aa)) form a disordered region. A compositionally biased stretch (basic and acidic residues) spans 96 to 138 (DESKTEEVVEAKKEEEVEEKKTEEAPVVVEEEKKPEAEEEKPA).

In terms of tissue distribution, predominantly expressed in petioles (at protein level). Mainly observed in shoots, flowers, siliques and roots, and, to a lower extent, in stems and leaves.

It localises to the cytoplasm. It is found in the cytosol. Functionally, binds calcium Ca(2+) and may act as a signal mediator to buffer Ca(2+). The protein is Cytosolic calcium-binding protein 1 of Arabidopsis thaliana (Mouse-ear cress).